The following is a 1069-amino-acid chain: MGSVRWKTHQQWLIIFWILSFSGVFGFSELWFSIEPQDVSVSAGQHVVLDCQAGGESPVSVRWRENGVQIQESECVRLLSNGSLCVSNLTQQRDEGYYQCVANNQYGAIISHRARLTITGVLVFSAHPVPLELRLGSVARFSCAVNRSPADISWEINQRSLPQDSDRITVLPNGVLQIRNVTMRDAGKYRCVAANAASRVTSREAELVLIPVGGPRRLLKPLIIAGPQNISVALHQPVVLECLAEGNPRPLVSWSRADSKPIDVSAASVLGNGNLMISAVKAHHSGTYVCRATTPGTRNYTTAAGNVTVLPPSLVEKPESQTRPRAGTARFSCQAEGTPTPQITWFKNGEVIRTNGRTKMYNNKLVITQIIPEDDAFYQCLAENSQGSVVSTSRLIVVQSENRPSAPRNIHAETISSSAILLAWERPQYNADKVIAYSIHYMKSEGLNNEEYQAVIGNDTTSHIVDDLEPARNYTFYIVAYMAMGASRMSEQVTRHTLEDVPLRTPELSLTSRSPTDILVSWQPLPPKLSRGRVSAYRLSYRTATDEQVNSVELPVSGENGTQYLLQDLQPDTIYLIRMSVSTRVGWSQPSAWSSHRTPKTSSATVPPAPNLELEPLNCTSVSVRWFPAASDVLIQGFKLSFHPDGQSEDSITQLPPQDHQHTITALNPRVKYHVKVLAFSANGDGYQAHQTVNTPGCPSTPNRRLAALPPPDHTHAKANSSSAVHLSWGRPAFSSGKPVTFSVRYGPASPSEASSVRYIQTSEQTVMVTGLQPNTRYEFAVRLHMDQMSSPWSATVYQRTLLEAPMSPPESVKVTLIEADTALVCWKQPNQPNLSVTHYTVLYASQSSWLAGEWQVLQREGTNTMALLEKLESGNVYLVKISASNLAGDGPFSNTVELAVKGKPHHGKNPRHADSHAEKTAFIDGLYHIDEKSMSGIIVGVCIALSCIILCIFILLSKTQTQKSASSKMIGSMRNEVMHNEASSANQQPAENAEVLLPMMRNHFIDAKGGSNLLINHAGPINCGSQTKRKRWSIFNHSQRSNESKNETEDPACLYEVGKTVLCYEDEA.

A signal peptide spans 1–26 (MGSVRWKTHQQWLIIFWILSFSGVFG). The Extracellular portion of the chain corresponds to 27-936 (FSELWFSIEP…LYHIDEKSMS (910 aa)). Ig-like domains lie at 30–117 (LWFS…ARLT), 122–208 (LVFS…AELV), 221–308 (PLII…GNVT), and 312–396 (PSLV…SRLI). 2 disulfides stabilise this stretch: Cys-51/Cys-100 and Cys-143/Cys-191. N-linked (GlcNAc...) asparagine glycans are attached at residues Asn-81, Asn-88, Asn-180, and Asn-229. Cys-242 and Cys-290 form a disulfide bridge. Asn-299 and Asn-306 each carry an N-linked (GlcNAc...) asparagine glycan. The interval 317-336 (KPESQTRPRAGTARFSCQAE) is disordered. Cys-333 and Cys-380 are disulfide-bonded. Fibronectin type-III domains are found at residues 406-500 (APRN…TLED), 502-601 (PLRT…TPKT), 608-701 (PAPN…CPST), 711-804 (PPDH…TLLE), and 809-904 (PPES…VKGK). Residues Asn-458, Asn-473, and Asn-560 are each glycosylated (N-linked (GlcNAc...) asparagine). The segment covering 590–605 (PSAWSSHRTPKTSSAT) has biased composition (polar residues). The interval 590–609 (PSAWSSHRTPKTSSATVPPA) is disordered. N-linked (GlcNAc...) asparagine glycosylation is found at Asn-618, Asn-720, and Asn-834. The chain crosses the membrane as a helical span at residues 937–957 (GIIVGVCIALSCIILCIFILL). Over 958-1069 (SKTQTQKSAS…KTVLCYEDEA (112 aa)) the chain is Cytoplasmic.

It belongs to the immunoglobulin superfamily. DCC family. Initially expressed in the ventral forebrain and ventral spinal cord. Later, also expressed in the midbrain and in parts of the diencephalon and hindbrain.

The protein resides in the membrane. Functionally, may play a role in anteroposterior axis elongation. The sequence is that of Protogenin B from Danio rerio (Zebrafish).